A 142-amino-acid chain; its full sequence is Hemoglobin subunit theta-1 (142 aa).

A Globin domain is found at 2–142; that stretch reads ALAAADRATV…VISALASDCR (141 aa). The heme b site is built by H59 and H88.

The protein belongs to the globin family.

This is Hemoglobin subunit theta-1 (HBQ1) from Equus caballus (Horse).